A 161-amino-acid polypeptide reads, in one-letter code: Probable metalloprotease HVO_1016 (161 aa).

The MPN domain maps to 10 to 131; it reads VGIAADALDF…WEAFDQSGEV (122 aa). The active-site Proton donor/acceptor is the Glu-31. His-87, His-89, and Asp-100 together coordinate Zn(2+). A JAMM motif motif is present at residues 87–100; it reads HSHPNGVLRPSDAD.

It belongs to the peptidase M67B family. As to quaternary structure, monomer and homodimer. The cofactor is Zn(2+).

Probable metalloprotease. Does not hydrolyze SAMP1- and SAMP2-protein conjugates, diglycine-AMC, Ub-AMC, hemoglobin, cytochrome c, carbonic anhydrase, creatinine phosphokinase, beta-amylase and bovine serum albumin. This is Probable metalloprotease HVO_1016 from Haloferax volcanii (strain ATCC 29605 / DSM 3757 / JCM 8879 / NBRC 14742 / NCIMB 2012 / VKM B-1768 / DS2) (Halobacterium volcanii).